The sequence spans 95 residues: Large ribosomal subunit protein bL25 (95 aa).

The tract at residues 1–20 (MSFKFNAEVRSKQGKGASRR) is disordered.

It belongs to the bacterial ribosomal protein bL25 family. As to quaternary structure, part of the 50S ribosomal subunit; part of the 5S rRNA/L5/L18/L25 subcomplex. Contacts the 5S rRNA. Binds to the 5S rRNA independently of L5 and L18.

Functionally, this is one of the proteins that binds to the 5S RNA in the ribosome where it forms part of the central protuberance. This chain is Large ribosomal subunit protein bL25, found in Histophilus somni (strain 129Pt) (Haemophilus somnus).